The chain runs to 73 residues: AVFDQSCKGVYDRSLFSKLDRVCDDCYNLYRKHYVATGCRRNCYGNLVFRQCLDDLMLVDVVDEYYVASVQMV.

3 cysteine pairs are disulfide-bonded: Cys-7–Cys-43, Cys-23–Cys-39, and Cys-26–Cys-52. Val-73 bears the Valine amide mark.

Belongs to the arthropod CHH/MIH/GIH/VIH hormone family. In terms of tissue distribution, produced by the medulla terminalis X-organ in the eyestalks and transported to the sinus gland where they are stored and released.

The protein resides in the secreted. In terms of biological role, hormone found in the sinus gland of isopods and decapods which controls the blood sugar level. Has a secretagogue action over the amylase released from the midgut gland. May act as a stress hormone and may be involved in the control of molting and reproduction. The chain is Crustacean hyperglycemic hormone from Jasus lalandii (Cape rock lobster).